We begin with the raw amino-acid sequence, 253 residues long: 3-deoxy-manno-octulosonate cytidylyltransferase (253 aa).

Belongs to the KdsB family.

It localises to the cytoplasm. It catalyses the reaction 3-deoxy-alpha-D-manno-oct-2-ulosonate + CTP = CMP-3-deoxy-beta-D-manno-octulosonate + diphosphate. The protein operates within nucleotide-sugar biosynthesis; CMP-3-deoxy-D-manno-octulosonate biosynthesis; CMP-3-deoxy-D-manno-octulosonate from 3-deoxy-D-manno-octulosonate and CTP: step 1/1. Its pathway is bacterial outer membrane biogenesis; lipopolysaccharide biosynthesis. Its function is as follows. Activates KDO (a required 8-carbon sugar) for incorporation into bacterial lipopolysaccharide in Gram-negative bacteria. The chain is 3-deoxy-manno-octulosonate cytidylyltransferase from Neisseria meningitidis serogroup C (strain 053442).